The sequence spans 413 residues: Arginine biosynthesis bifunctional protein ArgJ (413 aa).

Residues threonine 158, lysine 184, threonine 195, glutamate 285, asparagine 408, and serine 413 each coordinate substrate. Threonine 195 serves as the catalytic Nucleophile.

This sequence belongs to the ArgJ family. Heterotetramer of two alpha and two beta chains.

Its subcellular location is the cytoplasm. The catalysed reaction is N(2)-acetyl-L-ornithine + L-glutamate = N-acetyl-L-glutamate + L-ornithine. It carries out the reaction L-glutamate + acetyl-CoA = N-acetyl-L-glutamate + CoA + H(+). It participates in amino-acid biosynthesis; L-arginine biosynthesis; L-ornithine and N-acetyl-L-glutamate from L-glutamate and N(2)-acetyl-L-ornithine (cyclic): step 1/1. Its pathway is amino-acid biosynthesis; L-arginine biosynthesis; N(2)-acetyl-L-ornithine from L-glutamate: step 1/4. Catalyzes two activities which are involved in the cyclic version of arginine biosynthesis: the synthesis of N-acetylglutamate from glutamate and acetyl-CoA as the acetyl donor, and of ornithine by transacetylation between N(2)-acetylornithine and glutamate. This is Arginine biosynthesis bifunctional protein ArgJ from Bradyrhizobium diazoefficiens (strain JCM 10833 / BCRC 13528 / IAM 13628 / NBRC 14792 / USDA 110).